A 150-amino-acid chain; its full sequence is Nucleoside diphosphate kinase (150 aa).

6 residues coordinate ATP: Lys-9, Phe-57, Arg-85, Thr-91, Arg-102, and Asn-112. His-115 functions as the Pros-phosphohistidine intermediate in the catalytic mechanism.

It belongs to the NDK family. The cofactor is Mg(2+).

The protein resides in the cytoplasm. It catalyses the reaction a 2'-deoxyribonucleoside 5'-diphosphate + ATP = a 2'-deoxyribonucleoside 5'-triphosphate + ADP. The enzyme catalyses a ribonucleoside 5'-diphosphate + ATP = a ribonucleoside 5'-triphosphate + ADP. Major role in the synthesis of nucleoside triphosphates other than ATP. The ATP gamma phosphate is transferred to the NDP beta phosphate via a ping-pong mechanism, using a phosphorylated active-site intermediate. The sequence is that of Nucleoside diphosphate kinase from Methanothermobacter thermautotrophicus (strain ATCC 29096 / DSM 1053 / JCM 10044 / NBRC 100330 / Delta H) (Methanobacterium thermoautotrophicum).